A 343-amino-acid polypeptide reads, in one-letter code: Protein RecA (343 aa).

An ATP-binding site is contributed by 66 to 73; the sequence is GPESSGKT.

It belongs to the RecA family.

The protein resides in the cytoplasm. Its function is as follows. Can catalyze the hydrolysis of ATP in the presence of single-stranded DNA, the ATP-dependent uptake of single-stranded DNA by duplex DNA, and the ATP-dependent hybridization of homologous single-stranded DNAs. It interacts with LexA causing its activation and leading to its autocatalytic cleavage. In Rickettsia canadensis (strain McKiel), this protein is Protein RecA.